The chain runs to 224 residues: Orotate phosphoribosyltransferase (224 aa).

5-phospho-alpha-D-ribose 1-diphosphate contacts are provided by residues Lys-26, Tyr-73–Lys-74, Arg-100, Lys-101, Lys-104, His-106, and Glu-127–Ser-135. Positions 131 and 160 each coordinate orotate.

This sequence belongs to the purine/pyrimidine phosphoribosyltransferase family. PyrE subfamily. As to quaternary structure, homodimer. It depends on Mg(2+) as a cofactor.

The catalysed reaction is orotidine 5'-phosphate + diphosphate = orotate + 5-phospho-alpha-D-ribose 1-diphosphate. Its pathway is pyrimidine metabolism; UMP biosynthesis via de novo pathway; UMP from orotate: step 1/2. Catalyzes the transfer of a ribosyl phosphate group from 5-phosphoribose 1-diphosphate to orotate, leading to the formation of orotidine monophosphate (OMP). The sequence is that of Orotate phosphoribosyltransferase from Clostridium botulinum (strain Alaska E43 / Type E3).